Reading from the N-terminus, the 237-residue chain is tRNA (guanine-N(1)-)-methyltransferase (237 aa).

S-adenosyl-L-methionine-binding positions include Gly-113 and 133-138 (VGDFIV).

Belongs to the RNA methyltransferase TrmD family. Homodimer.

The protein localises to the cytoplasm. It catalyses the reaction guanosine(37) in tRNA + S-adenosyl-L-methionine = N(1)-methylguanosine(37) in tRNA + S-adenosyl-L-homocysteine + H(+). In terms of biological role, specifically methylates guanosine-37 in various tRNAs. In Hydrogenovibrio crunogenus (strain DSM 25203 / XCL-2) (Thiomicrospira crunogena), this protein is tRNA (guanine-N(1)-)-methyltransferase.